The following is a 205-amino-acid chain: uncharacterized protein (205 aa).

This sequence belongs to the flavoredoxin family. The cofactor is FMN.

This is an uncharacterized protein from Bacillus subtilis (strain 168).